The following is a 324-amino-acid chain: Beta-ketoacyl-[acyl-carrier-protein] synthase III (324 aa).

Residues Cys112 and His249 contribute to the active site. The tract at residues 250–254 is ACP-binding; the sequence is QANRR. Residue Asn279 is part of the active site.

Belongs to the thiolase-like superfamily. FabH family. Homodimer.

The protein resides in the cytoplasm. The catalysed reaction is malonyl-[ACP] + acetyl-CoA + H(+) = 3-oxobutanoyl-[ACP] + CO2 + CoA. It participates in lipid metabolism; fatty acid biosynthesis. Functionally, catalyzes the condensation reaction of fatty acid synthesis by the addition to an acyl acceptor of two carbons from malonyl-ACP. Catalyzes the first condensation reaction which initiates fatty acid synthesis and may therefore play a role in governing the total rate of fatty acid production. Possesses both acetoacetyl-ACP synthase and acetyl transacylase activities. Its substrate specificity determines the biosynthesis of branched-chain and/or straight-chain of fatty acids. The protein is Beta-ketoacyl-[acyl-carrier-protein] synthase III of Streptococcus pyogenes serotype M6 (strain ATCC BAA-946 / MGAS10394).